Reading from the N-terminus, the 92-residue chain is Large ribosomal subunit protein eL37 (92 aa).

Positions 19, 22, 34, and 37 each coordinate Zn(2+). Residues 19-37 (CRRCGRRSYHIQKSTCANC) form a C4-type zinc finger. Positions 50–92 (SEKAKRRKTTGSGRTAHLRDVHRRFKNGFQVGTPKGARGPENH) are disordered.

It belongs to the eukaryotic ribosomal protein eL37 family. Zn(2+) serves as cofactor.

In terms of biological role, binds to the 23S rRNA. The polypeptide is Large ribosomal subunit protein eL37 (rpl37) (Emericella nidulans (strain FGSC A4 / ATCC 38163 / CBS 112.46 / NRRL 194 / M139) (Aspergillus nidulans)).